A 264-amino-acid polypeptide reads, in one-letter code: General transcription factor IIF subunit 2 (264 aa).

It belongs to the TFIIF beta subunit family. In terms of assembly, heterodimer of an alpha and a beta subunit.

The protein resides in the nucleus. In terms of biological role, TFIIF is a general transcription initiation factor that binds to RNA polymerase II and helps to recruit it to the initiation complex in collaboration with TFIIB. The protein is General transcription factor IIF subunit 2 (gtf2f2) of Xenopus laevis (African clawed frog).